The chain runs to 275 residues: Probable siderophore transport system ATP-binding protein YusV (275 aa).

Positions 6–242 constitute an ABC transporter domain; it reads ISTETLSLGY…DLVQNVFSMN (237 aa). Residue 38 to 45 participates in ATP binding; it reads GSNGCGKS.

It belongs to the ABC transporter superfamily. As to quaternary structure, the iron-hydroxamate siderophore complex is composed of one ATP-binding protein (YusV), two transmembrane proteins (YfiZ and YfhA) and a solute-binding protein (YfiY); the catechoplate siderophore complex is composed of one ATP-binding protein (YusV), two transmembrane proteins (FeuB and FeuC) and a solute-binding protein (FeuA).

It is found in the cell membrane. In terms of biological role, provides the ATPase subunit for at least 2 ABC transporter complexes; YfiYZ/YfhA/YusV involved in import of the iron-hydroxamate siderophores schizokinen, arthrobactin and corprogen, and FeuABC/YusV involved in import of the catecholate siderophores bacillibactin and enterobactin. Probably responsible for energy coupling to the transport system. The polypeptide is Probable siderophore transport system ATP-binding protein YusV (yusV) (Bacillus subtilis (strain 168)).